Consider the following 125-residue polypeptide: MALKDTAKKMTDLLESIQQNLLKAEKGNKAAAQRVRTESIKLEKTAKVYRKESIKAEKMGLMKKSKAAAKKAKAAAKKPVRATKTVAKKACTKRTCATKAKVKPTKKAAPKTKVKTAKKTRSTKK.

The disordered stretch occupies residues 98–125 (TKAKVKPTKKAAPKTKVKTAKKTRSTKK). Residues 100–125 (AKVKPTKKAAPKTKVKTAKKTRSTKK) show a composition bias toward basic residues.

Belongs to the histone H1/H5 family. HCT subfamily.

In terms of biological role, might have a role analogous to that of eukaryotic histone proteins. The chain is Histone H1-like protein Hc1 (hctA) from Chlamydia trachomatis serovar L2 (strain ATCC VR-902B / DSM 19102 / 434/Bu).